A 350-amino-acid polypeptide reads, in one-letter code: Thioredoxin-like fold domain-containing protein MRL7L, chloroplastic (350 aa).

A chloroplast-targeting transit peptide spans 1 to 48 (MILPFSTQFTCPVQDNGFSPSSLLSHCKRDRFEVTSLRYDSFGSVKTA). Disordered stretches follow at residues 78 to 107 (KKEE…LDDP) and 182 to 201 (NEKK…DSEK). Composition is skewed to acidic residues over residues 82-93 (DSDSEDEEDEVK) and 186-200 (EEED…DDSE).

It localises to the plastid. The protein localises to the chloroplast stroma. It is found in the nucleus. In terms of biological role, plays an essential role in early steps of chloroplast development. Involved in the regulation of plastid gene expression. Required for the proper function of the plastid transcriptional machinery and protein accumulation in thylakoid membranes. May function as molecular chaperone to ensure proper organization of the nucleoids in chloroplasts. Is a necessary component of phytochrome signaling for photosynthesis-associated plastid-encoded genes (PhAPGs) activation. Mediates the degradation of two repressors of chloroplast biogenesis, PIF1 and PIF3 in nucleus. Promotes the assembly of the plastid-encoded RNA polymerase (PEP) complex for PhAPG transcription in plastids. The polypeptide is Thioredoxin-like fold domain-containing protein MRL7L, chloroplastic (Arabidopsis thaliana (Mouse-ear cress)).